The chain runs to 398 residues: Meiotically up-regulated gene 126 protein (398 aa).

Disordered stretches follow at residues 30–81 (EEME…QRHR) and 119–260 (FESD…NSNS). Composition is skewed to polar residues over residues 119–135 (FESD…NFPT) and 183–199 (VQEN…QEPQ). The segment covering 210-222 (QANQQETSSNQEE) has biased composition (low complexity). A compositionally biased stretch (basic and acidic residues) spans 224 to 236 (SFDRQETQDDKQK). Positions 248-260 (RNRNQATITNSNS) are enriched in polar residues. 4 consecutive transmembrane segments (helical) span residues 269 to 289 (IFVI…DLIE), 305 to 325 (IFLW…YLAL), 341 to 361 (GACF…CFLI), and 373 to 393 (LEIY…GAIY).

Its subcellular location is the membrane. Functionally, has a role in meiosis. This is Meiotically up-regulated gene 126 protein (mug126) from Schizosaccharomyces pombe (strain 972 / ATCC 24843) (Fission yeast).